A 336-amino-acid polypeptide reads, in one-letter code: Fructokinase-2 (336 aa).

The protein belongs to the carbohydrate kinase PfkB family. Expressed in stem, sheaths, anthers, and panicles (at protein level).

The enzyme catalyses D-fructose + ATP = D-fructose 6-phosphate + ADP + H(+). It participates in glycan biosynthesis; starch biosynthesis. Strongly inhibited at high fructose concentration. Functionally, may play an important role in maintaining the flux of carbon towards starch formation in endosperm. May also be involved in a sugar-sensing pathway. This chain is Fructokinase-2 (FRK2), found in Oryza sativa subsp. japonica (Rice).